Reading from the N-terminus, the 224-residue chain is 7-cyano-7-deazaguanine synthase (224 aa).

Position 10–20 (10–20) interacts with ATP; it reads LSGGLDSATVV. The Zn(2+) site is built by cysteine 189, cysteine 199, cysteine 202, and cysteine 205.

This sequence belongs to the QueC family. It depends on Zn(2+) as a cofactor.

It carries out the reaction 7-carboxy-7-deazaguanine + NH4(+) + ATP = 7-cyano-7-deazaguanine + ADP + phosphate + H2O + H(+). It participates in purine metabolism; 7-cyano-7-deazaguanine biosynthesis. In terms of biological role, catalyzes the ATP-dependent conversion of 7-carboxy-7-deazaguanine (CDG) to 7-cyano-7-deazaguanine (preQ(0)). The chain is 7-cyano-7-deazaguanine synthase from Pseudomonas putida (strain ATCC 47054 / DSM 6125 / CFBP 8728 / NCIMB 11950 / KT2440).